A 448-amino-acid chain; its full sequence is Probable D-serine dehydratase (448 aa).

N6-(pyridoxal phosphate)lysine is present on Lys119.

Belongs to the serine/threonine dehydratase family. DsdA subfamily. Pyridoxal 5'-phosphate is required as a cofactor.

It catalyses the reaction D-serine = pyruvate + NH4(+). In Chromobacterium violaceum (strain ATCC 12472 / DSM 30191 / JCM 1249 / CCUG 213 / NBRC 12614 / NCIMB 9131 / NCTC 9757 / MK), this protein is Probable D-serine dehydratase.